The chain runs to 367 residues: Glutamate 5-kinase (367 aa).

Lys10 lines the ATP pocket. Substrate-binding residues include Ser50, Asp137, and Asn149. Residues 169-170 (TD) and 211-217 (TGGMSTK) each bind ATP. The region spanning 275-353 (AGEITVDDGA…QQIAEILGYE (79 aa)) is the PUA domain.

The protein belongs to the glutamate 5-kinase family.

The protein resides in the cytoplasm. It catalyses the reaction L-glutamate + ATP = L-glutamyl 5-phosphate + ADP. The protein operates within amino-acid biosynthesis; L-proline biosynthesis; L-glutamate 5-semialdehyde from L-glutamate: step 1/2. Functionally, catalyzes the transfer of a phosphate group to glutamate to form L-glutamate 5-phosphate. This is Glutamate 5-kinase from Pectobacterium carotovorum subsp. carotovorum (strain PC1).